Here is a 281-residue protein sequence, read N- to C-terminus: Short neuropeptide F (281 aa).

Residues 1 to 30 form the signal peptide; it reads MFHLKRELSQGCALALICLVSLQMQQPAQA. Positions 31–64 are excised as a propeptide; it reads EVSSAQGTPLSNLYDNLLQREYAGPVVFPNHQVE. Phenylalanine amide is present on residues F77 and F111. The propeptide occupies 115–165; sequence DPSLPQMRRTAYDDLLERELTLNSQQQQQQLGTEPDSDLGADYDGLYERVV. The interval 137–156 is disordered; that stretch reads NSQQQQQQLGTEPDSDLGAD. The residue at position 173 (W173) is a Tryptophan amide. The propeptide occupies 176–246; the sequence is SVPQFEANNA…NDTSEFQREV (71 aa). The disordered stretch occupies residues 226-281; that stretch reads ANDEDTDTDLNNDTSEFQREVRKPMRLRWGRSTGKAPSEQKHTPEETSSIPPKTQN. W254 is modified (tryptophan amide). The propeptide occupies 257 to 281; the sequence is STGKAPSEQKHTPEETSSIPPKTQN. Positions 271–281 are enriched in polar residues; sequence ETSSIPPKTQN.

This sequence belongs to the NPY family. Stage 17 embryos show expression in the two brain hemispheres (neural cells located in the dorsal posterior region), the connected ventral ganglion (pairs of neural cells along the ventral midline) and the peripheral nervous system (expressed in the antennal-maxillary sensory cells). In the brain hemispheres of the feeding third instar larva, expression in neural cells is located in the dorsal-anterior region of the protocerebrum. In the larval ventral ganglion, expression is seen in the neural cells located in the subesophagial region, along the ventral midline and in thoracic and abdominal segments. In the adult brain, expression is seen in the medulla and the mushroom body calyx (at protein level).

The protein localises to the secreted. Functionally, plays a role in controlling food intake and regulating body size. The protein is Short neuropeptide F (sNPF) of Drosophila melanogaster (Fruit fly).